Consider the following 367-residue polypeptide: Queuine tRNA-ribosyltransferase (367 aa).

D89 functions as the Proton acceptor in the catalytic mechanism. Substrate-binding positions include 89–93, D143, Q185, and G212; that span reads DSGGF. Positions 243–249 are RNA binding; the sequence is GVGTPSD. D262 functions as the Nucleophile in the catalytic mechanism. Positions 267 to 271 are RNA binding; important for wobble base 34 recognition; sequence TRNAR. Zn(2+) contacts are provided by C300, C302, C305, and H331.

The protein belongs to the queuine tRNA-ribosyltransferase family. As to quaternary structure, homodimer. Within each dimer, one monomer is responsible for RNA recognition and catalysis, while the other monomer binds to the replacement base PreQ1. Zn(2+) serves as cofactor.

The enzyme catalyses 7-aminomethyl-7-carbaguanine + guanosine(34) in tRNA = 7-aminomethyl-7-carbaguanosine(34) in tRNA + guanine. It participates in tRNA modification; tRNA-queuosine biosynthesis. Catalyzes the base-exchange of a guanine (G) residue with the queuine precursor 7-aminomethyl-7-deazaguanine (PreQ1) at position 34 (anticodon wobble position) in tRNAs with GU(N) anticodons (tRNA-Asp, -Asn, -His and -Tyr). Catalysis occurs through a double-displacement mechanism. The nucleophile active site attacks the C1' of nucleotide 34 to detach the guanine base from the RNA, forming a covalent enzyme-RNA intermediate. The proton acceptor active site deprotonates the incoming PreQ1, allowing a nucleophilic attack on the C1' of the ribose to form the product. After dissociation, two additional enzymatic reactions on the tRNA convert PreQ1 to queuine (Q), resulting in the hypermodified nucleoside queuosine (7-(((4,5-cis-dihydroxy-2-cyclopenten-1-yl)amino)methyl)-7-deazaguanosine). This chain is Queuine tRNA-ribosyltransferase, found in Thiobacillus denitrificans (strain ATCC 25259 / T1).